The sequence spans 249 residues: Exosome complex component Rrp41 (249 aa).

Belongs to the RNase PH family. Rrp41 subfamily. Component of the archaeal exosome complex. Forms a hexameric ring-like arrangement composed of 3 Rrp41-Rrp42 heterodimers. The hexameric ring associates with a trimer of Rrp4 and/or Csl4 subunits.

It localises to the cytoplasm. Its function is as follows. Catalytic component of the exosome, which is a complex involved in RNA degradation. Has 3'-&gt;5' exoribonuclease activity. Can also synthesize heteromeric RNA-tails. This is Exosome complex component Rrp41 from Pyrococcus horikoshii (strain ATCC 700860 / DSM 12428 / JCM 9974 / NBRC 100139 / OT-3).